The sequence spans 431 residues: Enolase (431 aa).

Gln163 serves as a coordination point for (2R)-2-phosphoglycerate. The Proton donor role is filled by Glu205. Mg(2+)-binding residues include Asp242, Glu283, and Asp310. The (2R)-2-phosphoglycerate site is built by Lys335, Arg364, Ser365, and Lys386. Residue Lys335 is the Proton acceptor of the active site.

The protein belongs to the enolase family. Mg(2+) serves as cofactor.

It localises to the cytoplasm. Its subcellular location is the secreted. The protein localises to the cell surface. It catalyses the reaction (2R)-2-phosphoglycerate = phosphoenolpyruvate + H2O. It functions in the pathway carbohydrate degradation; glycolysis; pyruvate from D-glyceraldehyde 3-phosphate: step 4/5. Catalyzes the reversible conversion of 2-phosphoglycerate (2-PG) into phosphoenolpyruvate (PEP). It is essential for the degradation of carbohydrates via glycolysis. The sequence is that of Enolase from Kineococcus radiotolerans (strain ATCC BAA-149 / DSM 14245 / SRS30216).